The chain runs to 152 residues: Protein SprT-like (152 aa).

Residues 7-148 (QRLVEEVSLQ…GKCKGKLNLI (142 aa)) enclose the SprT-like domain. Residue His-67 participates in Zn(2+) binding. Residue Glu-68 is part of the active site. His-71 is a Zn(2+) binding site.

The protein belongs to the SprT family. It depends on Zn(2+) as a cofactor.

Its subcellular location is the cytoplasm. The chain is Protein SprT-like from Bacillus cereus (strain 03BB102).